Here is a 90-residue protein sequence, read N- to C-terminus: Small ribosomal subunit protein uS15 (90 aa).

Belongs to the universal ribosomal protein uS15 family. In terms of assembly, part of the 30S ribosomal subunit. Forms a bridge to the 50S subunit in the 70S ribosome, contacting the 23S rRNA.

Its function is as follows. One of the primary rRNA binding proteins, it binds directly to 16S rRNA where it helps nucleate assembly of the platform of the 30S subunit by binding and bridging several RNA helices of the 16S rRNA. Functionally, forms an intersubunit bridge (bridge B4) with the 23S rRNA of the 50S subunit in the ribosome. This is Small ribosomal subunit protein uS15 from Blochmanniella floridana.